The chain runs to 397 residues: Lysophospholipid transporter LplT (397 aa).

The next 11 membrane-spanning stretches (helical) occupy residues 16–36, 53–73, 91–111, 139–159, 164–184, 227–247, 253–273, 281–301, 305–325, 352–372, and 373–393; these read MLAV…LLFA, VLQM…GQFA, LGAG…LVGI, LMES…GILA, LAAL…NLWI, LFWG…PVAL, AMPT…AGAA, TVSR…AFAV, LLPA…FIVP, NVAM…GVPP, and VAVG…LWVW.

This sequence belongs to the major facilitator superfamily. LplT (TC 2.A.1.42) family.

Its subcellular location is the cell inner membrane. Its function is as follows. Catalyzes the facilitated diffusion of 2-acyl-glycero-3-phosphoethanolamine (2-acyl-GPE) into the cell. The sequence is that of Lysophospholipid transporter LplT from Klebsiella pneumoniae subsp. pneumoniae (strain ATCC 700721 / MGH 78578).